We begin with the raw amino-acid sequence, 333 residues long: MPNHQNMLDNQTILITGGTGSFGKCFVRKVLDTTNAKKIIVYSRDELKQSEMAMEFNDPRMRFFIGDVRDLERLNYALEGVDICIHAAALKHVPIAEYNPLECIKTNIMGASNVINACLKNAISQVIALSTDKAANPINLYGATKLCSDKLFVSANNFKGSSQTQFSVVRYGNVVGSRGSVVPFFKKLVQNKASEIPITDIRMTRFWITLDEGVSFVLKSLKRMHGGEIFVPKIPSMKMTDLAKALAPNTPTKIIGIRPGEKLHEVMIPKDESHLALEFEDFFIIQPTISFQTPKDYTLTKLHEKGQKVAPDFEYSSHNNNQWLEPDDLLKLL.

Residues 19–22 (TGSF), 43–48 (SRDELK), 67–68 (DV), Ala-87, Lys-91, and 129–130 (LS) each bind NADP(+). Substrate is bound at residue Lys-91. The active site involves Lys-133. NADP(+)-binding residues include Tyr-141 and Lys-145. Asn-173 provides a ligand contact to substrate. 174 to 178 (VVGSR) provides a ligand contact to NADP(+). Positions 181, 199, 258, and 261 each coordinate substrate.

It belongs to the polysaccharide synthase family. As to quaternary structure, homohexamer. It depends on NADP(+) as a cofactor.

The catalysed reaction is UDP-N-acetyl-alpha-D-glucosamine = UDP-2-acetamido-2,6-dideoxy-beta-L-arabino-hex-4-ulose + H2O. Functionally, catalyzes the first step in the biosynthesis of pseudaminic acid, a sialic-acid-like sugar that is used to modify flagellin. Has both C6 dehydratase and C5 epimerase activities that result in the production of both UDP-2-acetamido-2,6-dideoxy-beta-L-arabino-4-hexulose and UDP-2-acetamido-2,6-dideoxy-alpha-D-xylo-4-hexulose. The chain is UDP-N-acetylglucosamine 4,6-dehydratase (inverting) (pseB) from Helicobacter pylori (strain ATCC 700392 / 26695) (Campylobacter pylori).